A 257-amino-acid chain; its full sequence is tRNA pseudouridine synthase A (257 aa).

Asp57 serves as the catalytic Nucleophile. Substrate is bound at residue Tyr115.

It belongs to the tRNA pseudouridine synthase TruA family. Homodimer.

The catalysed reaction is uridine(38/39/40) in tRNA = pseudouridine(38/39/40) in tRNA. Its function is as follows. Formation of pseudouridine at positions 38, 39 and 40 in the anticodon stem and loop of transfer RNAs. The polypeptide is tRNA pseudouridine synthase A (Lawsonia intracellularis (strain PHE/MN1-00)).